Here is a 583-residue protein sequence, read N- to C-terminus: Sensor protein SrrB (583 aa).

Over 1-11 (MMSRLNSVVIK) the chain is Cytoplasmic. The chain crosses the membrane as a helical span at residues 12–32 (LWLTIILIVTTVLILLSIALI). Residues 33–174 (TFMQYYFTQE…SIEDTNNAIT (142 aa)) lie on the Extracellular side of the membrane. The chain crosses the membrane as a helical span at residues 175 to 195 (IITIITAVIFLTITTVFAFFL). The Cytoplasmic segment spans residues 196–583 (SSRITKPLRR…TFIIKLPKPE (388 aa)). The HAMP domain maps to 197-249 (SRITKPLRRLRDQATRVSEGDYSYKPSVTTKDEIGQLSQAFNQMSTEIEEHVD). The 218-residue stretch at 366–583 (NVSHELRTPI…TFIIKLPKPE (218 aa)) folds into the Histidine kinase domain. His369 carries the post-translational modification Phosphohistidine; by autocatalysis.

The protein localises to the cell membrane. The catalysed reaction is ATP + protein L-histidine = ADP + protein N-phospho-L-histidine.. Member of the two-component regulatory system SrrA/SrrB, which is involved in the global regulation of staphylococcal virulence factors in response to environmental oxygen levels as well as biofilm formation. Also plays an essential role in host-derived nitric oxide resistance by regulating hmp/flavohemoglobin, an enzyme that detoxifies nitric oxide by converting it to nitrate. Functions as a sensor protein kinase which is autophosphorylated at a histidine residue and transfers its phosphate group to SrrA. In turn, SrrA binds to the upstream promoter regions of the target genes to positively and negatively regulate their expression. The sequence is that of Sensor protein SrrB (srrB) from Staphylococcus aureus (strain MRSA252).